Consider the following 1023-residue polypeptide: Probable beta-glucosidase E (1023 aa).

The segment at 1-51 (MPKSYTPVHDSIPEEDHFSSDDESNFRLHRIDRSASRSQSPKENEGEPSIL) is disordered. Residues 1–128 (MPKSYTPVHD…AVYYSKTWWR (128 aa)) are Cytoplasmic-facing. Residues 11–45 (SIPEEDHFSSDDESNFRLHRIDRSASRSQSPKENE) show a composition bias toward basic and acidic residues. The chain crosses the membrane as a helical; Signal-anchor for type II membrane protein span at residues 129 to 149 (TLVVVIIALGLLVWGFLKYAS). The Extracellular portion of the chain corresponds to 150 to 1023 (TRGDIWEEYD…NLPLGKPFDP (874 aa)). Asn-199 and Asn-387 each carry an N-linked (GlcNAc...) asparagine glycan. Residue Asp-415 is part of the active site. Asn-458 and Asn-497 each carry an N-linked (GlcNAc...) asparagine glycan. 2 disordered regions span residues 485–515 (WESP…GSPG) and 822–841 (NPSR…PSYD). Over residues 827–838 (PAARPPDAVAPP) the composition is skewed to low complexity. Asn-848 is a glycosylation site (N-linked (GlcNAc...) asparagine). Residues 873 to 909 (ATTPPPPNPEASGSATDQKPHRTKPSDAGGGAGGNPS) form a disordered region. N-linked (GlcNAc...) asparagine glycosylation is found at Asn-964 and Asn-979.

The protein belongs to the glycosyl hydrolase 3 family.

Its subcellular location is the cell membrane. The enzyme catalyses Hydrolysis of terminal, non-reducing beta-D-glucosyl residues with release of beta-D-glucose.. The protein operates within glycan metabolism; cellulose degradation. Beta-glucosidases are one of a number of cellulolytic enzymes involved in the degradation of cellulosic biomass. Catalyzes the last step releasing glucose from the inhibitory cellobiose. In Emericella nidulans (strain FGSC A4 / ATCC 38163 / CBS 112.46 / NRRL 194 / M139) (Aspergillus nidulans), this protein is Probable beta-glucosidase E (bglE).